The chain runs to 423 residues: Kynureninase (423 aa).

Residues Leu-105, Ser-106, 133–136 (FPSD), Asp-218, His-221, and Tyr-243 contribute to the pyridoxal 5'-phosphate site. Residue Lys-244 is modified to N6-(pyridoxal phosphate)lysine. The pyridoxal 5'-phosphate site is built by Trp-273 and Asn-301.

This sequence belongs to the kynureninase family. Homodimer. Pyridoxal 5'-phosphate serves as cofactor.

The enzyme catalyses L-kynurenine + H2O = anthranilate + L-alanine + H(+). It catalyses the reaction 3-hydroxy-L-kynurenine + H2O = 3-hydroxyanthranilate + L-alanine + H(+). It functions in the pathway amino-acid degradation; L-kynurenine degradation; L-alanine and anthranilate from L-kynurenine: step 1/1. It participates in cofactor biosynthesis; NAD(+) biosynthesis; quinolinate from L-kynurenine: step 2/3. Functionally, catalyzes the cleavage of L-kynurenine (L-Kyn) and L-3-hydroxykynurenine (L-3OHKyn) into anthranilic acid (AA) and 3-hydroxyanthranilic acid (3-OHAA), respectively. The protein is Kynureninase of Xanthomonas oryzae pv. oryzae (strain PXO99A).